Here is a 518-residue protein sequence, read N- to C-terminus: Apolipoprotein N-acyltransferase (518 aa).

Helical transmembrane passes span 22–42 (LAFILGASTALSFAPYSLWII), 63–83 (FFHWLSFGFGCFAVGISWVHV), 101–121 (ALLALYLALYPALTGLGLAWF), 134–154 (LLFPALWTLTEWARGWVLTGF), 174–194 (IIGALGLSFIIAMIAGALALC), and 202–222 (LLILLPITAVAAWVAPKLSQI). Residues 234–484 (VQGNIPQSMK…TGVLSATIPL (251 aa)) form the CN hydrolase domain. The active-site Proton acceptor is the Glu-273. Residue Lys-343 is part of the active site. Cys-395 serves as the catalytic Nucleophile. The helical transmembrane segment at 492-512 (AKIGQTPLLILCGALLLVGFI) threads the bilayer.

This sequence belongs to the CN hydrolase family. Apolipoprotein N-acyltransferase subfamily.

The protein localises to the cell inner membrane. The enzyme catalyses N-terminal S-1,2-diacyl-sn-glyceryl-L-cysteinyl-[lipoprotein] + a glycerophospholipid = N-acyl-S-1,2-diacyl-sn-glyceryl-L-cysteinyl-[lipoprotein] + a 2-acyl-sn-glycero-3-phospholipid + H(+). Its pathway is protein modification; lipoprotein biosynthesis (N-acyl transfer). Catalyzes the phospholipid dependent N-acylation of the N-terminal cysteine of apolipoprotein, the last step in lipoprotein maturation. In Shewanella oneidensis (strain ATCC 700550 / JCM 31522 / CIP 106686 / LMG 19005 / NCIMB 14063 / MR-1), this protein is Apolipoprotein N-acyltransferase.